Here is a 2499-residue protein sequence, read N- to C-terminus: MIEGNFEKNNDNQVAIVGLGLRLPGNSGSPLEFWKNLLDGFDGIVDSNQRWSDTLHSIGEISNKNAGLIDLEENWHSFEPLFFGINPTDAKQIDPQIKLMLKLTWEAFEDASIDPLKLRGTNTSVFVGAANTDYSLINFEQNEAPINIFNGTLSAFANRISYCFDLRGTSLTLDTACSSSLNAVHLGYESIVNGKSNYSVVAGCNILLNPYITRSFHSINITGKSGRCNSFDESADGFVRSEGVVVLILKRLSLAIQDGDQIYCVMKGSSSNVDGTFKKTNFFAPSKNAQSTNIKNAFLSSNGAMKYQDIDFFELHSTGTQVGDPIEVEAVADIFKNVKQEPLLIGSVKSNIGHLEPASGVASLAKVCLMFKHRQFVKNIHFNNPNPNIKFKEWNVKVCTETTAFPDRQVSMAINSFGITGSNACVLLSEYIKPSEIKNQTSMKLNEKSKLLIPISTNSKKSLEQFKSKLLEEIDTYSESLTFEEFAMFQVYSKTTKLSQRSVLIGNDWNDLKIDINEIISTKNNKSGNIIKSNDINPPLVFSFCGQGPQYSKMGLNLYQNEPIFKEFMDLLDSILFKYFGYSIIQKLRSINDDPILINEPILALPSIFMIQISLYKLYLHWGITPSIIVGHSLGEVASAFCSGMIDLETACFVIYKRATIQNKTNGSGRLLAISLNLEEFNNQFSKEYPEIEISCFNSPSSIVVCGNELDILNISKSLKEKQIFNSLLGTSSAFHSSKQDIIKDEIIESTNHIQSRPPSITIFSTVTSNKFDKNTPYDSNYIFDNIRKPVLFQQTIENIFKYIESNDLGNSVIFLELSPHPTLNHYVKEMIPKNSNYFLNKDSISVLSSLNKKKEDINEIQSTISQLYCFGYNIDFSAQFKSEITSNSFKKCSYLIPHYQWDESLFWREGISSINNRKNGASINQLGNKNELSPHISYTSYIDIKEEPFRFLKDHQFRGKSLFPGVGYLDIILKLFPNQDLTIPLLEFKSQFVLTEGVKKTLTTNLYKSAKNEYRATFNFKDQTSGKWIQSANSRILMKSLDVTVKKVDVQSIRDQCNWSTLKREQLYDLIKNYSNISLLESFQRIEEASYGDNRCLCKVSLDPTSSYDNESFLNICIIDTCIHPCIFFDNPASSVFERIEHLKIYSSSVPLTAEDRVKQQYVYCYVELIKKYSDFIYFKTTCFLKDGTVLLHSPLVTIASTLSTNIDTNIECPNNQLFSQCLQPKDSILQSPLILKEYFNQQLQLQQSNIISISTLSSYLFSTLKKILNNLTTDEFQNGSLEEFIGKYSYILEEIQEASTFRSNLIFLSINFLLTHHKHIDQNQVSNFLLNNIPNELLVLDTIVSNKGISHIGIYQHQLILDIISKSIIPIVNEKIVFRILEIGCGVGELTKLINDKLESILNDNPSYNIDIEFVFSDYTDSKVLLIKERLFNSKKSCFFKIIDLNKQLQEQSFSPSYYDLIILSNTTNQIKDIKTSISFINEILTPNGHLLILDTNFIQTSIDEDYYLENYKQWLSFNYLNSGSGAMKLNQWNQLLINDLKFNNFICSTGEIEPYLIQVQKSNLSNSINSVSKEHSSEYDQIIIFGTCDEINIGSSFYGLVPIAINSIDKFKEHVKLQPLTDKSLILFIESVNLLTVDNFNQVSMNYIEINQHLLKNEISGCKHILISRNVNFETSNLFGSSLIGSFRYFCEFNQLNIYSFEFEGNNILSGDGGDKLFNIIQELSNSNKHSQNEFSIRSDGKIYYERIKLESNLKLKYKSKSYIENKNELVSRLKPDLTFALEAVLPLNPNFVEVKVMASGVNFKDFLVYRQLINMANSNENGDPSKPQFGYELSGIVTKVGKNVTKFKVGDHVMGGAFHTFSSSVHVDQDRIELKPSNISWFEASQSLVYLTSYCSLFELGRLDLYGSTETVLIHSGSGGIGLSCIDLLQVYGFKGFLFVTVGSEEKKQFLKDRYGNFITEIYSTKNTDYEYLIKEKLIELKAPSQEYGSFSMICVDLIINTLSADYMDANFNCLSQGGRIIDLSITHMTTTDTTDFYKFRNHIGYMTYESVIAGFRKHKHVLKIIVDLLASGKLKTIPFNVYPVTKIKEAIESLGDRKHIGKNIVNFNDPEGIDLIDCPEFSNNHNFIHPSSNYKIHQDTLGKTILITGQAGLSDTIIKWIREKRSDSIESIIVLSKSPIKFELERAIGRIRSTNLKIYFKQVDISDEKLLLKSINQLFEENKDIKPIESIFHNAFSPAECEPLEIDMNHLISSHSAKSMGAYNLHKLSLNWPIKQFVLSSSVTSILGSQRQCGYVASNCFIDALSRHRKSLNLPCISINWGLLGGGGFAARNDAVFKLFELQGSVGISKDLVWGSLDLLLQNQNESTNKMVASFEFHATCKTYKYHKLSYKLDYFLNPIISKESVTDEKEFSIRQDIVDKFASLLSTDQSKLNLDIKVIDYGADSLLVVEVKNWADNIFARNILSMPEIQNSTINQIINIVTTKVSNLPSKKK.

The Ketosynthase family 3 (KS3) domain maps to Asp-11 to Glu-430. Residues Cys-177, His-316, and His-354 each act as for beta-ketoacyl synthase activity in the active site. Positions Gly-623 to Tyr-656 are acyl/malonyl transferases. The For acyl/malonyl transferase activity role is filled by Ser-633. The segment at Ile-924–Val-1044 is N-terminal hotdog fold. A PKS/mFAS DH domain is found at Ile-924 to Asp-1209. His-956 (proton acceptor; for dehydratase activity) is an active-site residue. The tract at residues Asn-1059–Asp-1209 is C-terminal hotdog fold. Catalysis depends on Asp-1121, which acts as the Proton donor; for dehydratase activity. Residues Glu-2414 to Val-2491 enclose the Carrier domain. At Ser-2451 the chain carries O-(pantetheine 4'-phosphoryl)serine.

Pantetheine 4'-phosphate is required as a cofactor.

In terms of biological role, probable polyketide synthase. The polypeptide is Probable polyketide synthase 23 (pks23) (Dictyostelium discoideum (Social amoeba)).